Here is a 599-residue protein sequence, read N- to C-terminus: Elongation factor 4 (599 aa).

The region spanning 5–187 (SHIRNFSIIA…VLIKSVPAPV (183 aa)) is the tr-type G domain. GTP is bound by residues 17–22 (DHGKST) and 134–137 (NKID).

Belongs to the TRAFAC class translation factor GTPase superfamily. Classic translation factor GTPase family. LepA subfamily.

It is found in the cell inner membrane. It carries out the reaction GTP + H2O = GDP + phosphate + H(+). Its function is as follows. Required for accurate and efficient protein synthesis under certain stress conditions. May act as a fidelity factor of the translation reaction, by catalyzing a one-codon backward translocation of tRNAs on improperly translocated ribosomes. Back-translocation proceeds from a post-translocation (POST) complex to a pre-translocation (PRE) complex, thus giving elongation factor G a second chance to translocate the tRNAs correctly. Binds to ribosomes in a GTP-dependent manner. This is Elongation factor 4 from Saccharophagus degradans (strain 2-40 / ATCC 43961 / DSM 17024).